We begin with the raw amino-acid sequence, 213 residues long: Thymidylate kinase (213 aa).

10–17 (GLEGAGKT) is an ATP binding site.

Belongs to the thymidylate kinase family.

The enzyme catalyses dTMP + ATP = dTDP + ADP. Phosphorylation of dTMP to form dTDP in both de novo and salvage pathways of dTTP synthesis. This Klebsiella pneumoniae (strain 342) protein is Thymidylate kinase.